Reading from the N-terminus, the 89-residue chain is Small ribosomal subunit protein uS15 (89 aa).

Belongs to the universal ribosomal protein uS15 family. Part of the 30S ribosomal subunit. Forms a bridge to the 50S subunit in the 70S ribosome, contacting the 23S rRNA.

One of the primary rRNA binding proteins, it binds directly to 16S rRNA where it helps nucleate assembly of the platform of the 30S subunit by binding and bridging several RNA helices of the 16S rRNA. In terms of biological role, forms an intersubunit bridge (bridge B4) with the 23S rRNA of the 50S subunit in the ribosome. This Leuconostoc citreum (strain KM20) protein is Small ribosomal subunit protein uS15.